Here is a 248-residue protein sequence, read N- to C-terminus: 14-3-3-like protein G-BOX factor 14 lambda (248 aa).

A phosphoserine; by CRPK1 mark is found at Ser70, Ser112, and Ser193. Residue Thr214 is modified to Phosphothreonine; by CRPK1.

Belongs to the 14-3-3 family. Interacts with SERK1 in the cell membrane. Component of the SERK1 signaling complex, composed of KAPP, CDC48A, GRF6 or GRF7, SERK1, SERK2, SERK3/BAK1 and BRI1. Interacts with TPK1. Interacts with ADF1. Binds to CRPK1 at the plasma membrane. Interacts with DREB1A and DREB1B in the nucleus when activated by CRPK1-mediated phosphorylation upon freezing. Interacts with CINV1. Binds to the N-terminal region of B1L. Transphosphorylated by SERK1. In terms of processing, phosphorylated by CRPK1 in response to cold.

It localises to the nucleus. It is found in the cell membrane. The protein localises to the cytoplasm. In terms of biological role, is associated with a DNA binding complex that binds to the G box, a well-characterized cis-acting DNA regulatory element found in plant genes. Specific negative regulator of slow-vacuolar (SV) ion channel. Mediates F-actin dynamics possibly through inhibiting ADF1 phosphorylation. Negative regulator of freezing tolerance that modulates cold-responsive C-repeat-binding factors (CBF) DREB1A and DREB1B proteins stability by facilitating their ubiquitin-mediated degradation when activated by CRPK1-mediated phosphorylation in freezing conditions; this processus is counteracted by B1L. This Arabidopsis thaliana (Mouse-ear cress) protein is 14-3-3-like protein G-BOX factor 14 lambda.